The following is a 400-amino-acid chain: Glycerol-3-phosphate dehydrogenase [NAD(+)] 1 (400 aa).

Residues 50–55, Phe-138, Lys-161, and Ala-194 contribute to the NAD(+) site; that span reads GSGNWG. Residue Lys-161 participates in substrate binding. Lys-254 (proton acceptor) is an active-site residue. The NAD(+) site is built by Arg-319 and Gln-348. 319-320 contacts substrate; the sequence is RN.

The protein belongs to the NAD-dependent glycerol-3-phosphate dehydrogenase family.

It catalyses the reaction sn-glycerol 3-phosphate + NAD(+) = dihydroxyacetone phosphate + NADH + H(+). In Candida glabrata (strain ATCC 2001 / BCRC 20586 / JCM 3761 / NBRC 0622 / NRRL Y-65 / CBS 138) (Yeast), this protein is Glycerol-3-phosphate dehydrogenase [NAD(+)] 1 (GPD1).